The chain runs to 217 residues: Probable GTP-binding protein EngB (217 aa).

Residues E27–E201 form the EngB-type G domain. Residues G35 to S42, G62 to L66, D80 to G83, T147 to D150, and F180 to S182 contribute to the GTP site. The Mg(2+) site is built by S42 and T64.

It belongs to the TRAFAC class TrmE-Era-EngA-EngB-Septin-like GTPase superfamily. EngB GTPase family. Mg(2+) serves as cofactor.

Functionally, necessary for normal cell division and for the maintenance of normal septation. The sequence is that of Probable GTP-binding protein EngB from Yersinia enterocolitica serotype O:8 / biotype 1B (strain NCTC 13174 / 8081).